We begin with the raw amino-acid sequence, 274 residues long: Dermonecrotic toxin LspiSicTox-betaIII1 G (274 aa).

The active site involves histidine 5. 2 residues coordinate Mg(2+): glutamate 25 and aspartate 27. Histidine 41 acts as the Nucleophile in catalysis. 2 cysteine pairs are disulfide-bonded: cysteine 45/cysteine 51 and cysteine 47/cysteine 189. Asparagine 66 is a glycosylation site (N-linked (GlcNAc...) asparagine). Residue aspartate 85 participates in Mg(2+) binding.

Belongs to the arthropod phospholipase D family. Class II subfamily. It depends on Mg(2+) as a cofactor. In terms of tissue distribution, expressed by the venom gland.

It localises to the secreted. It carries out the reaction an N-(acyl)-sphingosylphosphocholine = an N-(acyl)-sphingosyl-1,3-cyclic phosphate + choline. The enzyme catalyses an N-(acyl)-sphingosylphosphoethanolamine = an N-(acyl)-sphingosyl-1,3-cyclic phosphate + ethanolamine. It catalyses the reaction a 1-acyl-sn-glycero-3-phosphocholine = a 1-acyl-sn-glycero-2,3-cyclic phosphate + choline. The catalysed reaction is a 1-acyl-sn-glycero-3-phosphoethanolamine = a 1-acyl-sn-glycero-2,3-cyclic phosphate + ethanolamine. Functionally, dermonecrotic toxins cleave the phosphodiester linkage between the phosphate and headgroup of certain phospholipids (sphingolipid and lysolipid substrates), forming an alcohol (often choline) and a cyclic phosphate. This toxin acts on sphingomyelin (SM). It may also act on ceramide phosphoethanolamine (CPE), lysophosphatidylcholine (LPC) and lysophosphatidylethanolamine (LPE), but not on lysophosphatidylserine (LPS), and lysophosphatidylglycerol (LPG). It acts by transphosphatidylation, releasing exclusively cyclic phosphate products as second products. Induces dermonecrosis, hemolysis, increased vascular permeability, edema, inflammatory response, and platelet aggregation. This Loxosceles spinulosa (Recluse spider) protein is Dermonecrotic toxin LspiSicTox-betaIII1 G.